Here is a 487-residue protein sequence, read N- to C-terminus: uncharacterized protein (487 aa).

An N-terminal signal peptide occupies residues 1–31 (MRFHRQGISAIIGVLLIVLLGFCWKLSGSYG). N-linked (GlcNAc...) asparagine glycans are attached at residues asparagine 40, asparagine 68, asparagine 150, asparagine 220, asparagine 304, asparagine 367, asparagine 442, and asparagine 448. Positions 141-176 (LERRHGRFGNGTNGDHPKGPPPPPPPPDEKGRGSQK) are disordered.

In terms of processing, N-glycosylated.

This is an uncharacterized protein from Saccharomyces cerevisiae (strain ATCC 204508 / S288c) (Baker's yeast).